The primary structure comprises 326 residues: tRNA(Ile)-lysidine synthase (326 aa).

S25–S30 serves as a coordination point for ATP.

This sequence belongs to the tRNA(Ile)-lysidine synthase family.

It localises to the cytoplasm. It catalyses the reaction cytidine(34) in tRNA(Ile2) + L-lysine + ATP = lysidine(34) in tRNA(Ile2) + AMP + diphosphate + H(+). In terms of biological role, ligates lysine onto the cytidine present at position 34 of the AUA codon-specific tRNA(Ile) that contains the anticodon CAU, in an ATP-dependent manner. Cytidine is converted to lysidine, thus changing the amino acid specificity of the tRNA from methionine to isoleucine. The sequence is that of tRNA(Ile)-lysidine synthase from Prochlorococcus marinus (strain NATL1A).